A 571-amino-acid polypeptide reads, in one-letter code: Endonuclease/exonuclease/phosphatase family domain-containing protein 1 (571 aa).

The disordered stretch occupies residues 1 to 20 (MGSTLGCHRSIPRDPSDLSH). Gly-2 carries the N-myristoyl glycine lipid modification. Over residues 11–20 (IPRDPSDLSH) the composition is skewed to basic and acidic residues. Residues Ser-16, Ser-21, and Ser-25 each carry the phosphoserine modification. The region spanning 38–67 (ERLNINTATEEELMTLPGVTRAVARSIVEY) is the HhH domain. Phosphoserine occurs at positions 106, 110, 162, and 175. The disordered stretch occupies residues 202–227 (SRPPSTHTNGGLTFTAKPHPSPTSLS). Residues 204-213 (PPSTHTNGGL) show a composition bias toward polar residues. At Thr-267 the chain carries Phosphothreonine. Position 430 is a phosphoserine (Ser-430). A disordered region spans residues 548-571 (RKEGPRSGNGLTLERSEANIKHER). Positions 561-571 (ERSEANIKHER) are enriched in basic and acidic residues.

The chain is Endonuclease/exonuclease/phosphatase family domain-containing protein 1 (EEPD1) from Bos taurus (Bovine).